The following is a 488-amino-acid chain: Aspartyl/glutamyl-tRNA(Asn/Gln) amidotransferase subunit B (488 aa).

The protein belongs to the GatB/GatE family. GatB subfamily. As to quaternary structure, heterotrimer of A, B and C subunits.

The catalysed reaction is L-glutamyl-tRNA(Gln) + L-glutamine + ATP + H2O = L-glutaminyl-tRNA(Gln) + L-glutamate + ADP + phosphate + H(+). It carries out the reaction L-aspartyl-tRNA(Asn) + L-glutamine + ATP + H2O = L-asparaginyl-tRNA(Asn) + L-glutamate + ADP + phosphate + 2 H(+). In terms of biological role, allows the formation of correctly charged Asn-tRNA(Asn) or Gln-tRNA(Gln) through the transamidation of misacylated Asp-tRNA(Asn) or Glu-tRNA(Gln) in organisms which lack either or both of asparaginyl-tRNA or glutaminyl-tRNA synthetases. The reaction takes place in the presence of glutamine and ATP through an activated phospho-Asp-tRNA(Asn) or phospho-Glu-tRNA(Gln). This chain is Aspartyl/glutamyl-tRNA(Asn/Gln) amidotransferase subunit B, found in Ralstonia nicotianae (strain ATCC BAA-1114 / GMI1000) (Ralstonia solanacearum).